Consider the following 306-residue polypeptide: Ankyrin repeat domain-containing protein 23 (306 aa).

Positions 41–90 (QEAVAREKLKLEEEKRKKLERFNSSRLTLDNLTDLENLVQRRRKKRQRHK) form a coiled coil. The segment at 78 to 107 (LVQRRRKKRQRHKVPPREPESGAEPQPQVP) is disordered. The span at 80–91 (QRRRKKRQRHKV) shows a compositional bias: basic residues. ANK repeat units follow at residues 144–173 (LHRTALHWACLKGHRQLVNKLLAAGAAIEV), 177–206 (LDRTPVFWACRGGHLDILKRLLNQGAQVNA), 210–239 (IWSTPLHVAVRMGHSDCLEHLIECGAHINA), and 243–272 (EGDTALHEAVRYGHHKATKLLLLYGAKLGV). The interaction with TTN stretch occupies residues 179–196 (RTPVFWACRGGHLDILKR).

Interacts with titin/TTN and MYPN.

It localises to the nucleus. Its function is as follows. May be involved in the energy metabolism. Could be a molecular link between myofibrillar stretch-induced signaling pathways and muscle gene expression. The chain is Ankyrin repeat domain-containing protein 23 (Ankrd23) from Mus musculus (Mouse).